The following is a 77-amino-acid chain: Defensin-like protein 159 (77 aa).

An N-terminal signal peptide occupies residues 1 to 27 (MAKLSCSYFLVLILVFSAFLMVERAEG). Disulfide bonds link cysteine 30–cysteine 77, cysteine 40–cysteine 59, cysteine 45–cysteine 71, and cysteine 49–cysteine 73.

The protein belongs to the DEFL family.

It localises to the secreted. This chain is Defensin-like protein 159 (LCR25), found in Arabidopsis thaliana (Mouse-ear cress).